A 299-amino-acid chain; its full sequence is Dye-decolorizing peroxidase YfeX (299 aa).

D143 serves as the catalytic Proton acceptor. H215 provides a ligand contact to heme.

Belongs to the DyP-type peroxidase family. Requires heme b as cofactor.

The protein resides in the cytoplasm. Has both general peroxidase activity and dye-decolorizing activity. Can catalyze the oxidation of both protoporphyrinogen IX and coproporphyrinogen III to their corresponding porphyrins. Also efficiently decolorizes the dyes alizarin red and Cibacron blue F3GA. This chain is Dye-decolorizing peroxidase YfeX (yfeX), found in Escherichia coli (strain K12).